The primary structure comprises 142 residues: Large ribosomal subunit protein uL11 (142 aa).

This sequence belongs to the universal ribosomal protein uL11 family. Part of the ribosomal stalk of the 50S ribosomal subunit. Interacts with L10 and the large rRNA to form the base of the stalk. L10 forms an elongated spine to which L12 dimers bind in a sequential fashion forming a multimeric L10(L12)X complex. In terms of processing, one or more lysine residues are methylated.

Its function is as follows. Forms part of the ribosomal stalk which helps the ribosome interact with GTP-bound translation factors. The sequence is that of Large ribosomal subunit protein uL11 from Xanthomonas axonopodis pv. citri (strain 306).